The primary structure comprises 844 residues: DNA mismatch repair protein MutS (844 aa).

ATP is bound at residue 610 to 617 (GPNMGGKS).

This sequence belongs to the DNA mismatch repair MutS family.

Functionally, this protein is involved in the repair of mismatches in DNA. It is possible that it carries out the mismatch recognition step. This protein has a weak ATPase activity. The protein is DNA mismatch repair protein MutS of Francisella tularensis subsp. mediasiatica (strain FSC147).